The chain runs to 231 residues: 7-cyano-7-deazaguanine synthase (231 aa).

8-18 is a binding site for ATP; sequence FSGGQDSTTCL. Positions 188, 197, 200, and 203 each coordinate Zn(2+).

It belongs to the QueC family. Zn(2+) serves as cofactor.

It carries out the reaction 7-carboxy-7-deazaguanine + NH4(+) + ATP = 7-cyano-7-deazaguanine + ADP + phosphate + H2O + H(+). It functions in the pathway purine metabolism; 7-cyano-7-deazaguanine biosynthesis. Its function is as follows. Catalyzes the ATP-dependent conversion of 7-carboxy-7-deazaguanine (CDG) to 7-cyano-7-deazaguanine (preQ(0)). The polypeptide is 7-cyano-7-deazaguanine synthase (Enterobacter sp. (strain 638)).